Here is an 83-residue protein sequence, read N- to C-terminus: Subtilisin-chymotrypsin inhibitor CI-1B (83 aa).

The segment at 1 to 28 (MRSMEGSVPKYPEPTEGSIGASGAKRSW) is disordered.

This sequence belongs to the protease inhibitor I13 (potato type I serine protease inhibitor) family.

Its function is as follows. Inhibits both subtilisin and chymotrypsin. The sequence is that of Subtilisin-chymotrypsin inhibitor CI-1B from Hordeum vulgare (Barley).